The primary structure comprises 557 residues: Arginine--tRNA ligase (557 aa).

The short motif at 128 to 138 (ANPTGPLHVGH) is the 'HIGH' region element.

It belongs to the class-I aminoacyl-tRNA synthetase family. As to quaternary structure, monomer.

It localises to the cytoplasm. It catalyses the reaction tRNA(Arg) + L-arginine + ATP = L-arginyl-tRNA(Arg) + AMP + diphosphate. This is Arginine--tRNA ligase from Thiobacillus denitrificans (strain ATCC 25259 / T1).